We begin with the raw amino-acid sequence, 95 residues long: Ribosome-binding factor A (95 aa).

It belongs to the RbfA family. As to quaternary structure, interacts with the 30S ribosomal subunit as a monomer, binding in a position overlapping the sites of the A and P site tRNAs, and displacing segments of the 16S rRNA. Probably contacts 16S rRNA and ribosomal protein S9 and S13.

Its subcellular location is the cytoplasm. In terms of biological role, one of several proteins that assist in the late maturation steps of the functional core of the 30S ribosomal subunit. Associates with free 30S ribosomal subunits (but not with 30S subunits that are part of 70S ribosomes or polysomes). Required for efficient processing of 16S rRNA. Probably interacts with the 5'-terminal helix region of 16S rRNA, bringing together different domains of the 30S ribosomal subunit which aids assembly. This chain is Ribosome-binding factor A, found in Thermus thermophilus (strain ATCC 27634 / DSM 579 / HB8).